A 287-amino-acid polypeptide reads, in one-letter code: Isopentenyl-diphosphate Delta-isomerase I (287 aa).

One can recognise a Nudix hydrolase domain in the interval 105-257 (LLHRAFSVFL…GVKLSPWFRL (153 aa)). Catalysis depends on residues Cys142 and Tyr207.

This sequence belongs to the IPP isomerase type 1 family.

The catalysed reaction is isopentenyl diphosphate = dimethylallyl diphosphate. It functions in the pathway isoprenoid biosynthesis; dimethylallyl diphosphate biosynthesis; dimethylallyl diphosphate from isopentenyl diphosphate: step 1/1. Its pathway is porphyrin-containing compound metabolism; chlorophyll biosynthesis. Catalyzes the 1,3-allylic rearrangement of the homoallylic substrate isopentenyl (IPP) to its highly electrophilic allylic isomer, dimethylallyl diphosphate (DMAPP). In Clarkia breweri (Fairy fans), this protein is Isopentenyl-diphosphate Delta-isomerase I (IPI1).